The primary structure comprises 218 residues: Small ribosomal subunit protein uS3c (218 aa).

One can recognise a KH type-2 domain in the interval 47–120; sequence VRTHIKSSSN…KLHIAIEKVA (74 aa).

It belongs to the universal ribosomal protein uS3 family. Part of the 30S ribosomal subunit.

Its subcellular location is the plastid. The protein resides in the chloroplast. The chain is Small ribosomal subunit protein uS3c (rps3) from Picea abies (Norway spruce).